The following is a 379-amino-acid chain: UDP-4-amino-4-deoxy-L-arabinose--oxoglutarate aminotransferase (379 aa).

Position 182 is an N6-(pyridoxal phosphate)lysine (K182).

Belongs to the DegT/DnrJ/EryC1 family. ArnB subfamily. Homodimer. Requires pyridoxal 5'-phosphate as cofactor.

It catalyses the reaction UDP-4-amino-4-deoxy-beta-L-arabinose + 2-oxoglutarate = UDP-beta-L-threo-pentopyranos-4-ulose + L-glutamate. The protein operates within nucleotide-sugar biosynthesis; UDP-4-deoxy-4-formamido-beta-L-arabinose biosynthesis; UDP-4-deoxy-4-formamido-beta-L-arabinose from UDP-alpha-D-glucuronate: step 2/3. Its pathway is bacterial outer membrane biogenesis; lipopolysaccharide biosynthesis. In terms of biological role, catalyzes the conversion of UDP-4-keto-arabinose (UDP-Ara4O) to UDP-4-amino-4-deoxy-L-arabinose (UDP-L-Ara4N). The modified arabinose is attached to lipid A and is required for resistance to polymyxin and cationic antimicrobial peptides. The protein is UDP-4-amino-4-deoxy-L-arabinose--oxoglutarate aminotransferase of Salmonella agona (strain SL483).